The primary structure comprises 181 residues: tRNA-splicing endonuclease (181 aa).

Catalysis depends on residues tyrosine 118, histidine 126, and lysine 157.

The protein belongs to the tRNA-intron endonuclease family. Archaeal short subfamily. As to quaternary structure, homotetramer; although the tetramer contains four active sites, only two participate in the cleavage. Therefore, it should be considered as a dimer of dimers.

The enzyme catalyses pretRNA = a 3'-half-tRNA molecule with a 5'-OH end + a 5'-half-tRNA molecule with a 2',3'-cyclic phosphate end + an intron with a 2',3'-cyclic phosphate and a 5'-hydroxyl terminus.. Its function is as follows. Endonuclease that removes tRNA introns. Cleaves pre-tRNA at the 5'- and 3'-splice sites to release the intron. The products are an intron and two tRNA half-molecules bearing 2',3' cyclic phosphate and 5'-OH termini. Recognizes a pseudosymmetric substrate in which 2 bulged loops of 3 bases are separated by a stem of 4 bp. This chain is tRNA-splicing endonuclease, found in Sulfolobus acidocaldarius (strain ATCC 33909 / DSM 639 / JCM 8929 / NBRC 15157 / NCIMB 11770).